The chain runs to 320 residues: GPI-specific phospholipase A2-like PGAP3 (320 aa).

Residues 1-20 (MAGLAARLVLLAGAAALASG) form the signal peptide. Residues 21-98 (SQGDREPVYR…QFHGKWPFSR (78 aa)) lie on the Lumenal side of the membrane. Asn-40 carries N-linked (GlcNAc...) asparagine glycosylation. The helical transmembrane segment at 99–119 (FLFFQEPASAVASFLNGLASL) threads the bilayer. Residues 120–135 (VMLCRYRTFVPASSPM) lie on the Cytoplasmic side of the membrane. The helical transmembrane segment at 136 to 156 (YHTCVAFAWVSLNAWFWSTVF) threads the bilayer. Topologically, residues 157–169 (HTRDTDLTEKMDY) are lumenal. A helical transmembrane segment spans residues 170 to 190 (FCASTVILHSIYLCCVRTVGL). The Cytoplasmic segment spans residues 191 to 193 (QHP). The helical transmembrane segment at 194–214 (AVVSAFRALLLLMLTVHVSYL) threads the bilayer. The Lumenal portion of the chain corresponds to 215–224 (SLIRFDYGYN). A helical transmembrane segment spans residues 225–245 (LVANVAIGLVNVVWWLAWCLW). The Cytoplasmic segment spans residues 246–257 (NQRRLPHVRKCV). The helical transmembrane segment at 258–278 (VVVLLLQGLSLLELLDFPPLF) threads the bilayer. Position 279 (Trp-279) is a topological domain, lumenal. The helical transmembrane segment at 280–299 (VLDAHAIWHISTIPVHVLFF) threads the bilayer. Over 300-320 (SFLEDDSLYLLKESEDKFKLD) the chain is Cytoplasmic.

Belongs to the PGAP3 family. In terms of tissue distribution, ubiquitously expressed, with highest levels in thyroid and placenta.

The protein localises to the golgi apparatus membrane. Its function is as follows. Involved in the fatty acid remodeling steps of GPI-anchor maturation where the unsaturated acyl chain at sn-2 of inositol phosphate is replaced by a saturated stearoyl chain. May catalyze the first step of the fatty acid remodeling, by removing the unsaturated acyl chain at sn-2 of inositol phosphate, generating a lyso-GPI intermediate. The fatty acid remodeling steps is critical for the integration of GPI-APs into lipid rafts. This chain is GPI-specific phospholipase A2-like PGAP3, found in Homo sapiens (Human).